A 168-amino-acid polypeptide reads, in one-letter code: uncharacterized protein (168 aa).

The transit peptide at 1-29 (MGWRFPSPSPRQASPVAPLLAAPTAVRSC) directs the protein to the mitochondrion. Basic and acidic residues predominate over residues 98 to 110 (GETKARRAREEGK). The segment at 98–152 (GETKARRAREEGKLPSLGNAPAPRRRSVAWPAAEGSCAAPESSPPASEASLPAPE) is disordered. Residues 128–152 (PAAEGSCAAPESSPPASEASLPAPE) show a composition bias toward low complexity.

It is found in the mitochondrion. This is an uncharacterized protein from Homo sapiens (Human).